The chain runs to 464 residues: 3-isopropylmalate dehydratase large subunit (464 aa).

[4Fe-4S] cluster is bound by residues Cys337, Cys397, and Cys400.

It belongs to the aconitase/IPM isomerase family. LeuC type 1 subfamily. In terms of assembly, heterodimer of LeuC and LeuD. [4Fe-4S] cluster serves as cofactor.

It carries out the reaction (2R,3S)-3-isopropylmalate = (2S)-2-isopropylmalate. The protein operates within amino-acid biosynthesis; L-leucine biosynthesis; L-leucine from 3-methyl-2-oxobutanoate: step 2/4. Its function is as follows. Catalyzes the isomerization between 2-isopropylmalate and 3-isopropylmalate, via the formation of 2-isopropylmaleate. This chain is 3-isopropylmalate dehydratase large subunit, found in Bacillus anthracis (strain A0248).